A 488-amino-acid polypeptide reads, in one-letter code: MARRNYKVLYVSGEVSPFVRVSSLADFMASFPQALEEEGFEARIMMPKYGIINDRKFRLHDVLRLSDIEVPLKEKTEMLHVKVTALPSSKIQTYFLYNEKHFKRSGLFSDLQLGGDHKGSAEKLIFFSVGVMETLVRLGWQPDIIHCNDWHAGLVPLLARTRYAKHDFFKKVKIVQSVHNVYRQGVFQPKMFQKHLDPEVFDGLEREGDDINLLATGIKYADLVTTTSPSYAKQIASDPESSFGMDKALKACKDRFHGILNGMDTRQWNPSSDKLIKKRYSAAQPELKLEDKKVLLEEVGLPFSEETPVVGVITTFDDVQGMGLLKESLSKLLELDLQLIVSGSGNKEFEQELRDLVEEHPEKLAVNTDFTDAFYHQMIAGLDMLIMPSRIESCGMKQMFAMNYGTVPIAYAGGGIVETIEEVSGDKGTGFVFTDYTAEALTAKLGEALSMFDDKERWAELMREGMERDFSWSASAEQYAELYREILG.

Position 20 (Arg20) interacts with ADP-alpha-D-glucose.

The protein belongs to the glycosyltransferase 1 family. Bacterial/plant glycogen synthase subfamily.

It catalyses the reaction [(1-&gt;4)-alpha-D-glucosyl](n) + ADP-alpha-D-glucose = [(1-&gt;4)-alpha-D-glucosyl](n+1) + ADP + H(+). It participates in glycan biosynthesis; glycogen biosynthesis. Its function is as follows. Synthesizes alpha-1,4-glucan chains using ADP-glucose. This chain is Glycogen synthase, found in Chlorobaculum parvum (strain DSM 263 / NCIMB 8327) (Chlorobium vibrioforme subsp. thiosulfatophilum).